We begin with the raw amino-acid sequence, 406 residues long: Cysteine desulfurase (406 aa).

Lys226 carries the N6-(pyridoxal phosphate)lysine modification. The active-site Cysteine persulfide intermediate is the Cys364.

Belongs to the class-V pyridoxal-phosphate-dependent aminotransferase family. Csd subfamily. Homodimer. Interacts with SufE and the SufBCD complex composed of SufB, SufC and SufD. The interaction with SufE is required to mediate the direct transfer of the sulfur atom from the S-sulfanylcysteine. Pyridoxal 5'-phosphate is required as a cofactor.

The protein localises to the cytoplasm. It catalyses the reaction (sulfur carrier)-H + L-cysteine = (sulfur carrier)-SH + L-alanine. It carries out the reaction L-selenocysteine + AH2 = hydrogenselenide + L-alanine + A + H(+). It participates in cofactor biosynthesis; iron-sulfur cluster biosynthesis. In terms of biological role, cysteine desulfurases mobilize the sulfur from L-cysteine to yield L-alanine, an essential step in sulfur metabolism for biosynthesis of a variety of sulfur-containing biomolecules. Component of the suf operon, which is activated and required under specific conditions such as oxidative stress and iron limitation. Acts as a potent selenocysteine lyase in vitro, that mobilizes selenium from L-selenocysteine. Selenocysteine lyase activity is however unsure in vivo. The sequence is that of Cysteine desulfurase from Salmonella dublin (strain CT_02021853).